A 361-amino-acid polypeptide reads, in one-letter code: Probable purine permease 5 (361 aa).

9 helical membrane-spanning segments follow: residues 37–57 (WILLFFSGAAMLIAFPASSLL), 70–90 (WIISWVAVAGWPITCLILLPT), 105–125 (LVLSYVVLGFLSAADNLMYAY), 134–154 (TSSLLASSSLAFSALFGYLIV), 158–178 (LNASVINSIVVITGAMAIIAL), 193–213 (YFAGFFWDIMGSALHGLIFAL), 235–255 (VMVSLTAFAFTTIGMVVSNDF), 285–305 (LGVLGATAVLFLASTVMAGVL), and 315–335 (VAAVILMHDPMSGFKILSLVL). The EamA domain maps to 75–178 (VAVAGWPITC…ITGAMAIIAL (104 aa)).

Belongs to the purine permeases (TC 2.A.7.14) family.

It localises to the membrane. This chain is Probable purine permease 5 (PUP5), found in Arabidopsis thaliana (Mouse-ear cress).